The chain runs to 488 residues: 1-aminocyclopropane-1-carboxylate synthase-like protein 1 (488 aa).

Lysine 273 is modified (N6-(pyridoxal phosphate)lysine).

It belongs to the class-I pyridoxal-phosphate-dependent aminotransferase family. As to quaternary structure, homodimer. Expressed in young leaves and flowers. Not expressed in roots.

The sequence is that of 1-aminocyclopropane-1-carboxylate synthase-like protein 1 (ACS1) from Arabidopsis thaliana (Mouse-ear cress).